The sequence spans 620 residues: UvrABC system protein C (620 aa).

In terms of domain architecture, GIY-YIG spans 13–92; that stretch reads DKPGVYIMKN…IKKYSPRYNI (80 aa). In terms of domain architecture, UVR spans 204–239; that stretch reads TSIIKKLKLEMEKAAEELEFEKAAKIRDRILAIELI.

It belongs to the UvrC family. As to quaternary structure, interacts with UvrB in an incision complex.

It is found in the cytoplasm. The UvrABC repair system catalyzes the recognition and processing of DNA lesions. UvrC both incises the 5' and 3' sides of the lesion. The N-terminal half is responsible for the 3' incision and the C-terminal half is responsible for the 5' incision. This Clostridium perfringens (strain ATCC 13124 / DSM 756 / JCM 1290 / NCIMB 6125 / NCTC 8237 / Type A) protein is UvrABC system protein C.